We begin with the raw amino-acid sequence, 101 residues long: Protein RnfH (101 aa).

This sequence belongs to the UPF0125 (RnfH) family.

This is Protein RnfH from Coxiella burnetii (strain CbuK_Q154) (Coxiella burnetii (strain Q154)).